Reading from the N-terminus, the 146-residue chain is Ribonuclease H (146 aa).

The RNase H type-1 domain occupies Met1–Lys143. Mg(2+) contacts are provided by Asp9, Glu47, Asp70, and Asp135.

It belongs to the RNase H family. As to quaternary structure, monomer. Requires Mg(2+) as cofactor.

It localises to the cytoplasm. The catalysed reaction is Endonucleolytic cleavage to 5'-phosphomonoester.. In terms of biological role, endonuclease that specifically degrades the RNA of RNA-DNA hybrids. The polypeptide is Ribonuclease H (Syntrophomonas wolfei subsp. wolfei (strain DSM 2245B / Goettingen)).